Consider the following 215-residue polypeptide: Pyridoxine/pyridoxamine 5'-phosphate oxidase (215 aa).

Residues Arg-9–Tyr-12 and Lys-69 each bind substrate. Residues Arg-64–Lys-69, Phe-79–Thr-80, Lys-86, and Gln-108 contribute to the FMN site. Substrate contacts are provided by Tyr-126, Arg-130, and Ser-134. Residues Gln-143 to Ser-144 and Trp-188 contribute to the FMN site. Arg-194–His-196 is a substrate binding site. Position 198 (Arg-198) interacts with FMN.

This sequence belongs to the pyridoxamine 5'-phosphate oxidase family. In terms of assembly, homodimer. It depends on FMN as a cofactor.

It catalyses the reaction pyridoxamine 5'-phosphate + O2 + H2O = pyridoxal 5'-phosphate + H2O2 + NH4(+). The enzyme catalyses pyridoxine 5'-phosphate + O2 = pyridoxal 5'-phosphate + H2O2. Its pathway is cofactor metabolism; pyridoxal 5'-phosphate salvage; pyridoxal 5'-phosphate from pyridoxamine 5'-phosphate: step 1/1. The protein operates within cofactor metabolism; pyridoxal 5'-phosphate salvage; pyridoxal 5'-phosphate from pyridoxine 5'-phosphate: step 1/1. In terms of biological role, catalyzes the oxidation of either pyridoxine 5'-phosphate (PNP) or pyridoxamine 5'-phosphate (PMP) into pyridoxal 5'-phosphate (PLP). In Pseudomonas fluorescens (strain Pf0-1), this protein is Pyridoxine/pyridoxamine 5'-phosphate oxidase.